The primary structure comprises 158 residues: 3-hydroxyacyl-[acyl-carrier-protein] dehydratase FabZ (158 aa).

His-57 is a catalytic residue.

This sequence belongs to the thioester dehydratase family. FabZ subfamily.

It is found in the cytoplasm. The catalysed reaction is a (3R)-hydroxyacyl-[ACP] = a (2E)-enoyl-[ACP] + H2O. Its function is as follows. Involved in unsaturated fatty acids biosynthesis. Catalyzes the dehydration of short chain beta-hydroxyacyl-ACPs and long chain saturated and unsaturated beta-hydroxyacyl-ACPs. The chain is 3-hydroxyacyl-[acyl-carrier-protein] dehydratase FabZ from Helicobacter acinonychis (strain Sheeba).